Consider the following 374-residue polypeptide: MSNLSPDFVLPENFCANPQEAWTIPARFYTDQNAFEHEKENVFAKSWICVAHSSELANANDYVTREIIGESIVLVRGRDKVLRAFYNVCPHRGHQLLSGEGKAKNVITCPYHAWAFKLDGNLAHARNCENVANFDSDKAQLVPVRLEEYAGFVFINMDPNATSVEDQLPGLGAKVLEACPEVHDLKLAARFTTRTPANWKNIVDNYLECYHCGPAHPGFSDSVQVDRYWHTMHGNWTLQYGFAKPSEQSFKFEEGTDAAFHGFWLWPCTMLNVTPIKGMMTVIYEFPVDSETTLQNYDIYFTNEELTDEQKSLIEWYRDVFRPEDLRLVESVQKGLKSRGYRGQGRIMADSSGSGISEHGIAHFHNLLAQVFKD.

Residues 47–155 form the Rieske domain; that stretch reads WICVAHSSEL…LEEYAGFVFI (109 aa). Cys-89, His-91, Cys-109, and His-112 together coordinate [2Fe-2S] cluster. Residues His-211, His-216, and Asp-325 each coordinate Fe cation.

This sequence belongs to the bacterial ring-hydroxylating dioxygenase alpha subunit family. CntA subfamily. In terms of assembly, composed of an oxygenase subunit and a reductase subunit. The cofactor is [2Fe-2S] cluster. Fe cation serves as cofactor.

The enzyme catalyses (R)-carnitine + NADH + O2 + H(+) = (3R)-3-hydroxy-4-oxobutanoate + trimethylamine + NAD(+) + H2O. The catalysed reaction is (R)-carnitine + NADPH + O2 + H(+) = (3R)-3-hydroxy-4-oxobutanoate + trimethylamine + NADP(+) + H2O. Its pathway is amine and polyamine metabolism; carnitine metabolism. Its function is as follows. Converts carnitine to trimethylamine and malic semialdehyde. This is Carnitine monooxygenase oxygenase subunit (yeaW) from Escherichia coli O157:H7.